A 64-amino-acid chain; its full sequence is Prokaryotic ubiquitin-like protein UBact (64 aa).

2 stretches are compositionally biased toward basic and acidic residues: residues 1–12 and 33–64; these read MSDLFRMEERRQ and PDVK…RSGE. The tract at residues 1 to 64 is disordered; it reads MSDLFRMEER…ARRYRQRSGE (64 aa). Glu-64 participates in a covalent cross-link: Isoglutamyl lysine isopeptide (Glu-Lys) (interchain with K-? in acceptor proteins).

This sequence belongs to the ubiquitin-like protein UBact family.

Functionally, may function as a protein modifier covalently attached to lysine residues of substrate proteins. This may serve to target the modified proteins for degradation by proteasomes. The polypeptide is Prokaryotic ubiquitin-like protein UBact (Chthonomonas calidirosea (strain DSM 23976 / ICMP 18418 / T49)).